A 641-amino-acid chain; its full sequence is Epithelial sodium channel subunit beta (641 aa).

At 1–50 (MHLKKYLLKGLHRLQKGPGYSYKELLVWYCNNTNTHGPKRIICEGPKKKA) the chain is on the cytoplasmic side. The helical transmembrane segment at 51-71 (MWFLITLLFTSLVCWQWGVFI) threads the bilayer. Residues 72–533 (RTYLSWEVSV…GGQFGFWMGG (462 aa)) lie on the Extracellular side of the membrane. 9 cysteine pairs are disulfide-bonded: cysteine 98–cysteine 273, cysteine 185–cysteine 190, cysteine 197–cysteine 204, cysteine 250–cysteine 257, cysteine 362–cysteine 449, cysteine 387–cysteine 445, cysteine 391–cysteine 441, cysteine 400–cysteine 427, and cysteine 402–cysteine 416. An N-linked (GlcNAc...) asparagine glycan is attached at asparagine 141. N-linked (GlcNAc...) asparagine glycosylation is present at asparagine 261. A helical transmembrane segment spans residues 534–554 (SVLCLIEFGEILIDFVWITII). Topologically, residues 555-641 (KLVAFAKSLR…IESDSEGDAI (87 aa)) are cytoplasmic. The tract at residues 593-624 (PDVARPGPDPGTYPDEQTLPIPGTPPPNYDSL) is disordered. A PY motif; recruits WW domain-containing proteins and is thereby required for ubiquitination and inhibition of the channel by NEDD4 and NEDD4L motif is present at residues 617–621 (PPPNY). Phosphoserine is present on residues serine 634 and serine 636.

It belongs to the amiloride-sensitive sodium channel (TC 1.A.6) family. SCNN1B subfamily. Component of the heterotrimeric epithelial sodium channel (ENaC) composed of an alpha/SCNN1A, a beta/SCNN1B and a gamma/SCNN1G subunit. An additional delta/SCNN1D subunit can replace the alpha/SCNN1A subunit to form an alternative channel with specific properties. Interacts with WWP1 (via WW domains). Interacts with WWP2 (via WW domains); inhibits the channel. Interacts with the full-length immature form of PCSK9 (pro-PCSK9). Interacts (N-glycosylated) with BPIFA1; the interaction is direct and inhibits the proteolytic processing of SCNN1A and SCNN1G and the activation of ENaC. In terms of processing, ubiquitinated. Can be ubiquitinated at multiple sites and undergo monoubiquitination and polyubiquitination. Ubiquitination by NEDD4 or NEDD4L inhibits the ENaC channel through endocytosis, intracellular retention and degradation of its individual subunits. However, some studies could not confirm the ubiquitination of this subunit of the ENaC. Phosphorylated on serine and threonine residues. Aldosterone and insulin increase the basal level of phosphorylation. Post-translationally, N-glycosylated. N-glycosylation is required for interaction with BPIFA1.

It localises to the apical cell membrane. The protein localises to the cytoplasmic vesicle membrane. The catalysed reaction is Na(+)(in) = Na(+)(out). Its activity is regulated as follows. Originally identified and characterized by its inhibition by the diuretic drug amiloride. Functionally, this is one of the three pore-forming subunits of the heterotrimeric epithelial sodium channel (ENaC), a critical regulator of sodium balance and fluid homeostasis. ENaC operates in epithelial tissues, where it mediates the electrodiffusion of sodium ions from extracellular fluid through the apical membrane of cells, with water following osmotically. It plays a key role in maintaining sodium homeostasis through electrogenic sodium reabsorption in the kidneys. Additionally, ENaC is essential for airway surface liquid homeostasis, which is crucial for proper mucus clearance. This Canis lupus familiaris (Dog) protein is Epithelial sodium channel subunit beta.